The sequence spans 406 residues: Linalool 8-monooxygenase (406 aa).

Cysteine 355 lines the heme pocket.

Belongs to the cytochrome P450 family. The cofactor is heme.

It carries out the reaction linalool + 2 reduced [NADPH--hemoprotein reductase] + 2 O2 = (6E)-8-oxolinalool + 2 oxidized [NADPH--hemoprotein reductase] + 3 H2O + 2 H(+). It participates in terpene metabolism; linalool degradation. In terms of biological role, catalyzes the 8-methyl hydroxylation of linalool. In Pseudomonas putida (Arthrobacter siderocapsulatus), this protein is Linalool 8-monooxygenase (linC).